The chain runs to 337 residues: Glyceraldehyde-3-phosphate dehydrogenase (337 aa).

NAD(+)-binding positions include 12-13 (RI), D34, and K79. D-glyceraldehyde 3-phosphate contacts are provided by residues 150 to 152 (SCT), T181, 210 to 211 (TG), and R233. Catalysis depends on C151, which acts as the Nucleophile. An NAD(+)-binding site is contributed by N315.

Belongs to the glyceraldehyde-3-phosphate dehydrogenase family. In terms of assembly, homotetramer. As to expression, expressed in all tissues examined.

Its subcellular location is the cytoplasm. It catalyses the reaction D-glyceraldehyde 3-phosphate + phosphate + NAD(+) = (2R)-3-phospho-glyceroyl phosphate + NADH + H(+). It participates in carbohydrate degradation; glycolysis; pyruvate from D-glyceraldehyde 3-phosphate: step 1/5. This Lentinula edodes (Shiitake mushroom) protein is Glyceraldehyde-3-phosphate dehydrogenase (gpd).